Here is a 764-residue protein sequence, read N- to C-terminus: Complement factor B (764 aa).

Residues 1 to 25 (MGSNLSPQLCLMPFILGLLSGGVTT) form the signal peptide. 3 consecutive Sushi domains span residues 35–100 (GSCS…ECRA), 101–160 (IHCP…ICDN), and 163–220 (GYCS…SCQD). 6 disulfide bridges follow: Cys-37/Cys-76, Cys-62/Cys-98, Cys-103/Cys-145, Cys-131/Cys-158, Cys-165/Cys-205, and Cys-191/Cys-218. N-linked (GlcNAc...) asparagine glycosylation is found at Asn-122 and Asn-142. One can recognise a VWFA domain in the interval 270–469 (NIYLVLDGSD…NLEDVFFQMI (200 aa)). Mg(2+)-binding residues include Ser-278 and Ser-280. Residue Asn-285 is glycosylated (N-linked (GlcNAc...) asparagine). Residue Thr-353 coordinates Mg(2+). Asn-378 carries an N-linked (GlcNAc...) asparagine glycan. One can recognise a Peptidase S1 domain in the interval 477–757 (LCGMVWEHRK…VLPWLKQKLQ (281 aa)). Cystine bridges form between Cys-478-Cys-596, Cys-511-Cys-527, Cys-599-Cys-615, Cys-656-Cys-682, and Cys-695-Cys-725. Catalysis depends on charge relay system residues His-526 and Asp-576. Catalysis depends on Ser-699, which acts as the Charge relay system.

Belongs to the peptidase S1 family. Monomer. Interacts with complement C3b; this interaction is dependent on the presence of Mg(2+). In terms of assembly, catalytic component of the C3 convertase of the alternative complement pathway, also named C3bBb, composed of complement factor B Bb and complement C3b. Catalytic component of the C5 convertase of the alternative complement pathway, also named C3bBb3b, composed of complement factor B Bb and additional molecules of complement C3b. Interacts to CFP; this interaction contributes to the stabilization of the active C3-convertase enzyme complex. Mg(2+) is required as a cofactor. The cofactor is Mn(2+). In terms of processing, cleaved by CFD following activation of the alternative complement system, generating Ba and Bb chains. Cleavage and activation takes place when CFB is already associated with complement C3b.

The protein resides in the secreted. It localises to the cell surface. It catalyses the reaction Cleavage of Arg-|-Ser bond in complement component C3 alpha-chain to yield C3a and C3b, and Arg-|-Xaa bond in complement component C5 alpha-chain to yield C5a and C5b.. Functionally, precursor of the catalytic component of the C3 and C5 convertase complexes of the alternative pathway of the complement system, a cascade of proteins that leads to phagocytosis and breakdown of pathogens and signaling that strengthens the adaptive immune system. The alternative complement pathway acts as an amplification loop that enhances other complement pathways (classical, lectin and GZMK) by promoting formation of additional C3 and C5 convertases. CFB is cleaved and activated by CFD to generate Ba and Bb chains; Bb chain constituting the catalytic component of the C3 and C5 convertases. Serine protease component of the complement C3 and C5 convertase complexes of the alternative complement pathway. Following cleavage and activation by factor D (CFD), forms the C3 convertase together with complement C3b. As part of the C3 convertase, cleaves and activates C3 into C3a anaphylatoxin and C3b opsonin, the next components of the complement pathways. When an additional complement C3b molecule binds to the C3 convertase, forms the C5 convertase, which cleaves and activates C5 into C5a anaphylatoxin and C5b component of the membrane attack complex. In terms of biological role, involved in proliferation and differentiation of preactivated B-lymphocytes, rapid spreading of peripheral blood monocytes, stimulation of lymphocyte blastogenesis and lysis of erythrocytes. The protein is Complement factor B (CFB) of Pongo pygmaeus (Bornean orangutan).